The primary structure comprises 564 residues: Eukaryotic translation initiation factor 3 subunit L (564 aa).

N-acetylserine is present on serine 2. Residues 331 to 537 (DAIRVFANIL…IHIADTKVAR (207 aa)) enclose the PCI domain. 2 positions are modified to N6-acetyllysine: lysine 465 and lysine 549.

It belongs to the eIF-3 subunit L family. Component of the eukaryotic translation initiation factor 3 (eIF-3) complex, which is composed of 13 subunits: EIF3A, EIF3B, EIF3C, EIF3D, EIF3E, EIF3F, EIF3G, EIF3H, EIF3I, EIF3J, EIF3K, EIF3L and EIF3M. The eIF-3 complex appears to include 3 stable modules: module A is composed of EIF3A, EIF3B, EIF3G and EIF3I; module B is composed of EIF3F, EIF3H, and EIF3M; and module C is composed of EIF3C, EIF3D, EIF3E, EIF3K and EIF3L. EIF3C of module C binds EIF3B of module A and EIF3H of module B, thereby linking the three modules. EIF3J is a labile subunit that binds to the eIF-3 complex via EIF3B. The eIF-3 complex interacts with RPS6KB1 under conditions of nutrient depletion. Mitogenic stimulation leads to binding and activation of a complex composed of MTOR and RPTOR, leading to phosphorylation and release of RPS6KB1 and binding of EIF4B to eIF-3. Interacts with RRN3.

The protein resides in the cytoplasm. Functionally, component of the eukaryotic translation initiation factor 3 (eIF-3) complex, which is required for several steps in the initiation of protein synthesis. The eIF-3 complex associates with the 40S ribosome and facilitates the recruitment of eIF-1, eIF-1A, eIF-2:GTP:methionyl-tRNAi and eIF-5 to form the 43S pre-initiation complex (43S PIC). The eIF-3 complex stimulates mRNA recruitment to the 43S PIC and scanning of the mRNA for AUG recognition. The eIF-3 complex is also required for disassembly and recycling of post-termination ribosomal complexes and subsequently prevents premature joining of the 40S and 60S ribosomal subunits prior to initiation. The eIF-3 complex specifically targets and initiates translation of a subset of mRNAs involved in cell proliferation, including cell cycling, differentiation and apoptosis, and uses different modes of RNA stem-loop binding to exert either translational activation or repression. The protein is Eukaryotic translation initiation factor 3 subunit L of Bos taurus (Bovine).